A 237-amino-acid chain; its full sequence is Probable transcriptional regulatory protein Bpro_2928 (237 aa).

This sequence belongs to the TACO1 family.

It is found in the cytoplasm. This Polaromonas sp. (strain JS666 / ATCC BAA-500) protein is Probable transcriptional regulatory protein Bpro_2928.